We begin with the raw amino-acid sequence, 309 residues long: Cytochrome c1, heme protein, mitochondrial (309 aa).

Residues 1–61 constitute a mitochondrion transit peptide; that stretch reads MFSNLSKRWA…LYADSLTAEA (61 aa). The Mitochondrial intermembrane portion of the chain corresponds to 62 to 262; sequence MTAAEHGLHA…TFLNWCAEPE (201 aa). A Cytochrome c domain is found at 88 to 241; sequence ASIRRGYQVY…DMVEYEDGTP (154 aa). C101, C104, and H105 together coordinate heme c. Positions 131–140 are enriched in acidic residues; that stretch reads EFEYDDEPDE. The disordered stretch occupies residues 131-168; sequence EFEYDDEPDEQGNPKKRPGKLSDYIPGPYPNEQAARAA. M225 contacts heme c. Residues 263–296 form a helical membrane-spanning segment; it reads HDERKRLGLKTVIILSSLYLLSIWVKKFKWAGIK. At 297–309 the chain is on the mitochondrial matrix side; the sequence is TRKFVFNPPKPRK.

The protein belongs to the cytochrome c family. As to quaternary structure, component of the ubiquinol-cytochrome c oxidoreductase (cytochrome b-c1 complex, complex III, CIII), a multisubunit enzyme composed of 10 subunits. The complex is composed of 3 respiratory subunits cytochrome b (COB), cytochrome c1 (CYT1) and Rieske protein (RIP1), 2 core protein subunits COR1 and QCR2, and 5 low-molecular weight protein subunits QCR6, QCR7, QCR8, QCR9 and QCR10. The complex exists as an obligatory dimer and forms supercomplexes (SCs) in the inner mitochondrial membrane with a monomer or a dimer of cytochrome c oxidase (complex IV, CIV), resulting in 2 different assemblies (supercomplexes III(2)IV and III(2)IV(2)). CYT1 interacts with COX5A at the CIII-CIV interface. It depends on heme c as a cofactor.

The protein resides in the mitochondrion inner membrane. The enzyme catalyses a quinol + 2 Fe(III)-[cytochrome c](out) = a quinone + 2 Fe(II)-[cytochrome c](out) + 2 H(+)(out). Its function is as follows. Component of the ubiquinol-cytochrome c oxidoreductase, a multisubunit transmembrane complex that is part of the mitochondrial electron transport chain which drives oxidative phosphorylation. The respiratory chain contains 3 multisubunit complexes succinate dehydrogenase (complex II, CII), ubiquinol-cytochrome c oxidoreductase (cytochrome b-c1 complex, complex III, CIII) and cytochrome c oxidase (complex IV, CIV), that cooperate to transfer electrons derived from NADH and succinate to molecular oxygen, creating an electrochemical gradient over the inner membrane that drives transmembrane transport and the ATP synthase. The cytochrome b-c1 complex catalyzes electron transfer from ubiquinol to cytochrome c, linking this redox reaction to translocation of protons across the mitochondrial inner membrane, with protons being carried across the membrane as hydrogens on the quinol. In the process called Q cycle, 2 protons are consumed from the matrix, 4 protons are released into the intermembrane space and 2 electrons are passed to cytochrome c. Cytochrome c1 is a catalytic core subunit containing a c-type heme. It transfers electrons from the [2Fe-2S] iron-sulfur cluster of the Rieske protein to cytochrome c. The chain is Cytochrome c1, heme protein, mitochondrial (CYT1) from Saccharomyces cerevisiae (strain ATCC 204508 / S288c) (Baker's yeast).